Reading from the N-terminus, the 100-residue chain is Nucleoid-associated protein MYPU_0500 (100 aa).

Belongs to the YbaB/EbfC family. Homodimer.

The protein resides in the cytoplasm. It is found in the nucleoid. Its function is as follows. Binds to DNA and alters its conformation. May be involved in regulation of gene expression, nucleoid organization and DNA protection. In Mycoplasmopsis pulmonis (strain UAB CTIP) (Mycoplasma pulmonis), this protein is Nucleoid-associated protein MYPU_0500.